Here is a 153-residue protein sequence, read N- to C-terminus: MLNQLQSLTEYVGGNNALIDQWLQARKQLLVAYYHLVGIKPNKEALSLLDEEALDNFCQNLVDYLSTGHFHLYEKMLHEAATHSEQLLALSTQLDFALQSNTQQIMTFYDNHLATAIDHDNCLEFQQALSSVGETLEERFTLEDNMIRLVYDN.

It belongs to the Rsd/AlgQ family. Interacts with RpoD.

It localises to the cytoplasm. In terms of biological role, binds RpoD and negatively regulates RpoD-mediated transcription activation by preventing the interaction between the primary sigma factor RpoD with the catalytic core of the RNA polymerase and with promoter DNA. May be involved in replacement of the RNA polymerase sigma subunit from RpoD to RpoS during the transition from exponential growth to the stationary phase. The sequence is that of Regulator of sigma D from Pectobacterium carotovorum subsp. carotovorum (strain PC1).